We begin with the raw amino-acid sequence, 252 residues long: Adenylate kinase (252 aa).

47–52 is an ATP binding site; sequence GSGKGT. Residues 67–96 form an NMP region; it reads ATGDMLRSQVKQGTPLGLEAKKIMDQGGLV. Residues Thr-68, Arg-73, 94-96, 123-126, and Gln-130 each bind AMP; these read GLV and GFPR. Positions 164-201 are LID; the sequence is GRLVHPASGRSYHKIFSPPKKEMTDDITGEPLVQRSDD. ATP contacts are provided by residues Arg-165 and 174-175; that span reads SY. Arg-198 and Arg-209 together coordinate AMP. Gln-237 is a binding site for ATP.

This sequence belongs to the adenylate kinase family. AK2 subfamily. Monomer.

The protein localises to the cytoplasm. It is found in the cytosol. It localises to the mitochondrion intermembrane space. The enzyme catalyses AMP + ATP = 2 ADP. Its function is as follows. Catalyzes the reversible transfer of the terminal phosphate group between ATP and AMP. Plays an important role in cellular energy homeostasis and in adenine nucleotide metabolism. Adenylate kinase activity is critical for regulation of the phosphate utilization and the AMP de novo biosynthesis pathways. The chain is Adenylate kinase from Lodderomyces elongisporus (strain ATCC 11503 / CBS 2605 / JCM 1781 / NBRC 1676 / NRRL YB-4239) (Yeast).